The chain runs to 158 residues: C-type lectin BML-2 (158 aa).

The first 23 residues, 1–23, serve as a signal peptide directing secretion; that stretch reads MGHFTFTGLCLLAMFLSLRGAEC. Intrachain disulfides connect cysteine 26-cysteine 37, cysteine 54-cysteine 154, cysteine 61-cysteine 156, and cysteine 129-cysteine 146. A C-type lectin domain is found at 33 to 155; the sequence is KNGLCYKVFS…CESLHPFLCQ (123 aa). A Mannose-binding motif is present at residues 119–121; it reads EPN. N-linked (GlcNAc...) asparagine glycosylation occurs at asparagine 121. 3 residues coordinate Ca(2+): glutamate 127, asparagine 142, and aspartate 143.

It belongs to the true venom lectin family. In terms of assembly, dimer. Probably non-covalently linked. Expressed by the venom gland.

The protein resides in the secreted. Functionally, recombinant C-type lectin BML-2 is able to agglutinate erythrocytes. May be a calcium-dependent lectin. This is C-type lectin BML-2 from Bungarus multicinctus (Many-banded krait).